A 234-amino-acid chain; its full sequence is uncharacterized protein (234 aa).

Low complexity predominate over residues 1–12 (MGSSSSSSLNNS). Positions 1-184 (MGSSSSSSLN…TPYLSGANSR (184 aa)) are disordered. Composition is skewed to polar residues over residues 21 to 40 (TPES…SILS) and 52 to 64 (KSTS…NLTP). Over residues 66 to 77 (KSRWSFSSSKKS) the composition is skewed to low complexity. Residues 105 to 120 (GDFTPSLGNTPKSSFS) are compositionally biased toward polar residues. The span at 152 to 167 (LGELFRDSIREEREES) shows a compositional bias: basic and acidic residues.

In terms of assembly, interacts with RLK902. Expressed in stems, rosette leaves and roots and weakly in inflorescences.

This is an uncharacterized protein from Arabidopsis thaliana (Mouse-ear cress).